A 285-amino-acid chain; its full sequence is Hypersensitive-induced reaction 1 protein (285 aa).

The N-myristoyl glycine moiety is linked to residue glycine 2. A coiled-coil region spans residues 118–190 (FEQKNEIAKS…EKILQIKRAE (73 aa)).

Homo- and heterodimer. Interacts with LRR1 (via LRR domain). In terms of tissue distribution, constitutively expressed in stems, roots and flowers, but not in leaves and fruits.

Functionally, positive regulator of hypersensitive response (HR)-like cell death. May be involved in potassium ion channel regulation. The protein is Hypersensitive-induced reaction 1 protein of Capsicum annuum (Capsicum pepper).